Here is a 26-residue protein sequence, read N- to C-terminus: Photosystem II stability/assembly factor HCF136, chloroplastic (26 aa).

It belongs to the Ycf48 family.

It localises to the plastid. The protein resides in the chloroplast thylakoid lumen. Its function is as follows. Essential for photosystem II (PSII) biogenesis; required for assembly of an early intermediate in PSII assembly that includes D2 (psbD) and cytochrome b559. The sequence is that of Photosystem II stability/assembly factor HCF136, chloroplastic from Populus euphratica (Euphrates poplar).